A 289-amino-acid chain; its full sequence is Enoyl-CoA delta isomerase 1, mitochondrial (289 aa).

The N-terminal 28 residues, 1–28 (MALAAARRVLLQAGSRLGRRGAVDGARR), are a transit peptide targeting the mitochondrion. Lys-48 carries the N6-acetyllysine; alternate modification. Lys-48 is modified (N6-succinyllysine; alternate). Lys-71 carries the post-translational modification N6-succinyllysine. At Lys-76 the chain carries N6-acetyllysine. Substrate contacts are provided by residues 93 to 97 (AGLDL), Gly-140, and Asn-164. Lys-222, Lys-229, and Lys-255 each carry N6-acetyllysine; alternate. Lys-222, Lys-229, and Lys-255 each carry N6-succinyllysine; alternate. Position 275 is an N6-succinyllysine (Lys-275). The residue at position 283 (Lys-283) is an N6-acetyllysine; alternate. N6-succinyllysine; alternate is present on Lys-283.

The protein belongs to the enoyl-CoA hydratase/isomerase family. Homotrimer.

Its subcellular location is the mitochondrion matrix. The enzyme catalyses a (3Z)-enoyl-CoA = a 4-saturated (2E)-enoyl-CoA. The catalysed reaction is a (3E)-enoyl-CoA = a 4-saturated (2E)-enoyl-CoA. It catalyses the reaction (3Z)-octenoyl-CoA = (2E)-octenoyl-CoA. It carries out the reaction (2E)-tetradecenoyl-CoA = (3Z)-tetradecenoyl-CoA. The enzyme catalyses (3Z)-dodecenoyl-CoA = (2E)-dodecenoyl-CoA. The catalysed reaction is (3Z)-hexenoyl-CoA = (2E)-hexenoyl-CoA. It catalyses the reaction (3Z)-decenoyl-CoA = (2E)-decenoyl-CoA. It functions in the pathway lipid metabolism; fatty acid beta-oxidation. Its function is as follows. Key enzyme of fatty acid beta-oxidation. Able to isomerize both 3-cis (3Z) and 3-trans (3E) double bonds into the 2-trans (2E) form in a range of enoyl-CoA species, with a preference for (3Z)-enoyl-CoAs over (3E)-enoyl-CoAs. The catalytic efficiency of this enzyme is not affected by the fatty acyl chain length. The sequence is that of Enoyl-CoA delta isomerase 1, mitochondrial from Rattus norvegicus (Rat).